A 275-amino-acid chain; its full sequence is Testis-specific gene 13 protein (275 aa).

Residues Met-1–Ser-20 are compositionally biased toward polar residues. The interval Met-1–Met-28 is disordered.

As to expression, testis-specific.

The chain is Testis-specific gene 13 protein (TSGA13) from Homo sapiens (Human).